A 35-amino-acid chain; its full sequence is Photosystem II reaction center protein T (35 aa).

Residues 3–23 (ALVYTFLLVSTLGIIFFAIFF) traverse the membrane as a helical segment.

The protein belongs to the PsbT family. In terms of assembly, PSII is composed of 1 copy each of membrane proteins PsbA, PsbB, PsbC, PsbD, PsbE, PsbF, PsbH, PsbI, PsbJ, PsbK, PsbL, PsbM, PsbT, PsbY, PsbZ, Psb30/Ycf12, at least 3 peripheral proteins of the oxygen-evolving complex and a large number of cofactors. It forms dimeric complexes.

The protein localises to the plastid. It is found in the chloroplast thylakoid membrane. Found at the monomer-monomer interface of the photosystem II (PS II) dimer, plays a role in assembly and dimerization of PSII. PSII is a light-driven water plastoquinone oxidoreductase, using light energy to abstract electrons from H(2)O, generating a proton gradient subsequently used for ATP formation. In Bassia hyssopifolia (Fivehorn smotherweed), this protein is Photosystem II reaction center protein T.